A 646-amino-acid polypeptide reads, in one-letter code: MESPTQTSEHIESMTEFLVKHYPDQLREISLSSDPKLHYPLFIEYAELVDDNPSLARQVFSDPEHYLRQFDDSAILAHKIALEHMKKFEEKIGIEKRFIHVRINTSGSPLERSPETFPSIGRVRVKHRGILMMLKGTVIRSGAVKMYEGEKMYRCRKCKHMFPIFPELESINSIVKPPFCPSQRSKACEGTNFDPVDDTVTRHDYQEIKIQENTQVLGVGVIPRSILVVLKDDLVDNVKAGDDVVVSGILTSKWSHDLKDVRCDLEPMLIANHVRRTNELKSEIDISDDLIEKFKNFWSHFRDTPLKGRNAILRGICPQVFGLFTVKLAVALTLIGGVQHVDASGTKVRGESHLLLIGDPGTGKSQFLKFAAKLSNRAVITTGLGSTSAGLTVTAVKDGGEWMLEAGALVLADGGLCCIDEFDSMREHDRATIHEAMEQQSISVAKAGLVTTLSTKTIVFGATNPKGQYDPDQSLSVNTALSGPLLSRFDIVLVLLDTKNPEWDAVVSSHILAEVQIEQDREVDDLTTIWPLPMLQRYIQFVKKNFRPVLSKEAEEIISSYYRLQRRSSTHNAARTTVRMLESLIRLAQAHARLMFRNEVTRLDAITAILCIESSMTISAIVDSMGNALHSNFSEEPDQECILFRH.

Residues 155–188 form a C4-type zinc finger; sequence CRKCKHMFPIFPELESINSIVKPPFCPSQRSKAC. The MCM domain occupies 308 to 511; the sequence is GRNAILRGIC…EWDAVVSSHI (204 aa). ATP is bound at residue 358–365; sequence GDPGTGKS. The Arginine finger motif lies at 487–490; it reads SRFD.

It belongs to the MCM family.

It is found in the nucleus. The catalysed reaction is ATP + H2O = ADP + phosphate + H(+). Probable DNA helicase that may play a role in DNA repair during meiosis. The chain is Probable DNA helicase MCM9 (MCM9) from Arabidopsis thaliana (Mouse-ear cress).